A 134-amino-acid chain; its full sequence is Large ribosomal subunit protein eL32 (134 aa).

The protein belongs to the eukaryotic ribosomal protein eL32 family.

In Drosophila melanogaster (Fruit fly), this protein is Large ribosomal subunit protein eL32 (RpL32).